The chain runs to 180 residues: DNA replication regulator protein HobA (180 aa).

5 residues coordinate Ca(2+): Glu-17, Glu-27, Glu-140, Glu-143, and Asn-176.

In terms of assembly, forms dimers and homotetramers. Interacts with domains I and II (residues 1-112) of DnaA. In a crystal with domains I and II of DnaA HobA forms tetramers with DnaA fragments bound at the dimer interface of the tetramer. Ca(2+) is required as a cofactor.

In terms of biological role, required for DNA replication initiation. Increases binding of DnaA to oriC region. The protein is DNA replication regulator protein HobA of Helicobacter pylori (strain ATCC 700392 / 26695) (Campylobacter pylori).